The following is a 69-amino-acid chain: Guanine nucleotide-binding protein subunit gamma (69 aa).

Ser2 carries the N-acetylserine modification. Cys66 carries the cysteine methyl ester modification. A lipid anchor (S-geranylgeranyl cysteine) is attached at Cys66. Residues 67 to 69 constitute a propeptide, removed in mature form; it reads SVL.

Belongs to the G protein gamma family. In terms of assembly, g proteins are composed of 3 units, alpha, beta and gamma. Interacts with gpbA, and this requires phlp1. In terms of processing, this protein is thought to be subject to lipidation, and this requires phlp1.

Its subcellular location is the cell membrane. Functionally, guanine nucleotide-binding proteins (G proteins) are involved as a modulator or transducer in various transmembrane signaling systems. This major G-protein of the squid photoreceptor is involved in visual transduction. The beta and gamma chains are required for the GTPase activity, for replacement of GDP by GTP, and for G protein-effector interaction. Required for normal chemotaxis in response to cAMP. This chain is Guanine nucleotide-binding protein subunit gamma (gpgA), found in Dictyostelium discoideum (Social amoeba).